Reading from the N-terminus, the 415-residue chain is Serine hydroxymethyltransferase 1 (415 aa).

(6S)-5,6,7,8-tetrahydrofolate contacts are provided by residues Leu-122 and 126 to 128; that span reads GHL. Lys-230 carries the post-translational modification N6-(pyridoxal phosphate)lysine.

This sequence belongs to the SHMT family. In terms of assembly, homodimer. Requires pyridoxal 5'-phosphate as cofactor.

The protein resides in the cytoplasm. The catalysed reaction is (6R)-5,10-methylene-5,6,7,8-tetrahydrofolate + glycine + H2O = (6S)-5,6,7,8-tetrahydrofolate + L-serine. The protein operates within one-carbon metabolism; tetrahydrofolate interconversion. It functions in the pathway amino-acid biosynthesis; glycine biosynthesis; glycine from L-serine: step 1/1. Its function is as follows. Catalyzes the reversible interconversion of serine and glycine with tetrahydrofolate (THF) serving as the one-carbon carrier. This reaction serves as the major source of one-carbon groups required for the biosynthesis of purines, thymidylate, methionine, and other important biomolecules. Also exhibits THF-independent aldolase activity toward beta-hydroxyamino acids, producing glycine and aldehydes, via a retro-aldol mechanism. The polypeptide is Serine hydroxymethyltransferase 1 (Cupriavidus pinatubonensis (strain JMP 134 / LMG 1197) (Cupriavidus necator (strain JMP 134))).